Here is a 366-residue protein sequence, read N- to C-terminus: Type 2A phosphatase-associated protein 42 (366 aa).

Residues 318–366 are disordered; the sequence is RVLQGGEEPEQAPDEENMDWQDRETYKAREWDEFKESHAKGSGNTMNRG. Over residues 324–336 the composition is skewed to acidic residues; the sequence is EEPEQAPDEENMD. A compositionally biased stretch (basic and acidic residues) spans 337-356; the sequence is WQDRETYKAREWDEFKESHA.

It belongs to the IGBP1/TAP42 family. In terms of assembly, associates with the PP2a (PPH21 and PPH22) and SIT4 protein phosphatase catalytic subunits. Interacts with PPG1, PPH3 and TIP41. In terms of processing, phosphorylated by TOR kinases. Dephosphorylated by CDC55, TPD3 and SIT4.

Its function is as follows. Involved in negative regulation of the TOR signaling pathway in response to type of available nitrogen source. Inhibitor of PP2A phosphatase SIT4, which results in inhibition of nuclear export of MSN2, due to lack of dephosphorylation by SIT4. Also required for rapamycin induced activation of expression of many nitrogen discrimination pathway (NDP) genes. In complex with PPH21, required for organization of the actin cytoskeletom during the cell cycle via a Rho GTPase-dependent mechanism. The protein is Type 2A phosphatase-associated protein 42 (TAP42) of Saccharomyces cerevisiae (strain ATCC 204508 / S288c) (Baker's yeast).